The chain runs to 155 residues: Cytochrome c-550 (155 aa).

Positions 1-20 (MKISIYATLAAITLALPAAA) are cleaved as a signal peptide. Glutamine 21 bears the Pyrrolidone carboxylic acid mark. 4 residues coordinate heme c: cysteine 35, cysteine 38, histidine 39, and methionine 120. Positions 150–155 (AEGESN) are excised as a propeptide.

Binds 1 heme c group covalently per subunit.

In Paracoccus denitrificans, this protein is Cytochrome c-550 (cycA).